The following is a 254-amino-acid chain: Alcohol dehydrogenase (254 aa).

10-33 (FVAGLGGIGLDTSREIVKSGPKNL) contributes to the NAD(+) binding site. A substrate-binding site is contributed by serine 138. Catalysis depends on tyrosine 151, which acts as the Proton acceptor.

This sequence belongs to the short-chain dehydrogenases/reductases (SDR) family. As to quaternary structure, homodimer.

The enzyme catalyses a primary alcohol + NAD(+) = an aldehyde + NADH + H(+). It carries out the reaction a secondary alcohol + NAD(+) = a ketone + NADH + H(+). The polypeptide is Alcohol dehydrogenase (Adh) (Drosophila hawaiiensis (Fruit fly)).